Here is a 134-residue protein sequence, read N- to C-terminus: Putative thioredoxin 2 (134 aa).

Residues 3 to 106 (STVELTKENF…LTDVIGQARK (104 aa)) enclose the Thioredoxin domain. Cys31 and Cys34 are oxidised to a cystine. The tract at residues 115–134 (AVAEQQAQAGQNGQEGQEGQ) is disordered. Over residues 117 to 134 (AEQQAQAGQNGQEGQEGQ) the composition is skewed to low complexity.

It belongs to the thioredoxin family.

The protein resides in the cytoplasm. Functionally, component of the thioredoxin-thioredoxin reductase system. Participates in various redox reactions through the reversible oxidation of its active center dithiol to a disulfide and catalyzes dithiol-disulfide exchange reactions. In Streptomyces coelicolor (strain ATCC BAA-471 / A3(2) / M145), this protein is Putative thioredoxin 2 (trxC).